The following is a 1462-amino-acid chain: DNA polymerase III PolC-type (1462 aa).

An Exonuclease domain is found at 424–580; the sequence is YVVFDVETTG…YDAEATGRLL (157 aa).

It belongs to the DNA polymerase type-C family. PolC subfamily.

It localises to the cytoplasm. The catalysed reaction is DNA(n) + a 2'-deoxyribonucleoside 5'-triphosphate = DNA(n+1) + diphosphate. Functionally, required for replicative DNA synthesis. This DNA polymerase also exhibits 3' to 5' exonuclease activity. The sequence is that of DNA polymerase III PolC-type from Streptococcus sanguinis (strain SK36).